The following is a 156-amino-acid chain: Snaclec jerdonibitin subunit alpha (156 aa).

A signal peptide spans methionine 1 to alanine 23. Intrachain disulfides connect cysteine 25–cysteine 36, cysteine 53–cysteine 150, and cysteine 125–cysteine 142. One can recognise a C-type lectin domain in the interval phenylalanine 32–lysine 151.

The protein belongs to the snaclec family. Heterodimer of subunits alpha and beta; disulfide-linked. Expressed by the venom gland.

The protein resides in the secreted. Its function is as follows. Snaclec that dose-dependently inhibits platelet aggregation induced by ristocetin or low-dose thrombin, but not by high-dose thrombin. Binds to GPIbalpha (GP1BA). In vivo, also dose-dependently induces thrombocytopenia of mice and platelet counts remains at very low level even after 18 hours intravenous injection. The protein is Snaclec jerdonibitin subunit alpha of Protobothrops jerdonii (Jerdon's pitviper).